Here is a 295-residue protein sequence, read N- to C-terminus: Protoheme IX farnesyltransferase (295 aa).

9 helical membrane passes run 8–28 (VTKP…FLLA), 35–55 (YPLF…GCVF), 84–104 (ASLV…WFGA), 107–127 (LACW…SLYM), 132–152 (VYGT…GYCA), 162–182 (AILL…IAIF), 208–228 (ITLY…GGYA), 233–253 (LVVA…GYKV), and 264–284 (FVFS…DFMV).

It belongs to the UbiA prenyltransferase family. Protoheme IX farnesyltransferase subfamily.

The protein localises to the cell inner membrane. The catalysed reaction is heme b + (2E,6E)-farnesyl diphosphate + H2O = Fe(II)-heme o + diphosphate. It functions in the pathway porphyrin-containing compound metabolism; heme O biosynthesis; heme O from protoheme: step 1/1. Converts heme B (protoheme IX) to heme O by substitution of the vinyl group on carbon 2 of heme B porphyrin ring with a hydroxyethyl farnesyl side group. The chain is Protoheme IX farnesyltransferase from Klebsiella pneumoniae subsp. pneumoniae (strain ATCC 700721 / MGH 78578).